The primary structure comprises 176 residues: Ribosome maturation factor RimM (176 aa).

Positions 100–173 (PEEYYDYQLI…RLRIDPPPGL (74 aa)) constitute a PRC barrel domain.

The protein belongs to the RimM family. Binds ribosomal protein uS19.

It is found in the cytoplasm. Its function is as follows. An accessory protein needed during the final step in the assembly of 30S ribosomal subunit, possibly for assembly of the head region. Essential for efficient processing of 16S rRNA. May be needed both before and after RbfA during the maturation of 16S rRNA. It has affinity for free ribosomal 30S subunits but not for 70S ribosomes. This chain is Ribosome maturation factor RimM, found in Acidothermus cellulolyticus (strain ATCC 43068 / DSM 8971 / 11B).